A 652-amino-acid chain; its full sequence is Acetyl-coenzyme A synthetase (652 aa).

Residues 191–194 (RAGR), threonine 311, and asparagine 335 contribute to the CoA site. ATP contacts are provided by residues 387–389 (GEP), 411–416 (DTWWQT), aspartate 500, and arginine 515. CoA is bound at residue serine 523. Arginine 526 is an ATP binding site. Positions 537, 539, and 542 each coordinate Mg(2+). Arginine 584 is a binding site for CoA. At lysine 609 the chain carries N6-acetyllysine.

This sequence belongs to the ATP-dependent AMP-binding enzyme family. Requires Mg(2+) as cofactor. Post-translationally, acetylated. Deacetylation by the SIR2-homolog deacetylase activates the enzyme.

The catalysed reaction is acetate + ATP + CoA = acetyl-CoA + AMP + diphosphate. Its function is as follows. Catalyzes the conversion of acetate into acetyl-CoA (AcCoA), an essential intermediate at the junction of anabolic and catabolic pathways. Acs undergoes a two-step reaction. In the first half reaction, Acs combines acetate with ATP to form acetyl-adenylate (AcAMP) intermediate. In the second half reaction, it can then transfer the acetyl group from AcAMP to the sulfhydryl group of CoA, forming the product AcCoA. In terms of biological role, enables the cell to use acetate during aerobic growth to generate energy via the TCA cycle, and biosynthetic compounds via the glyoxylate shunt. Acetylates CheY, the response regulator involved in flagellar movement and chemotaxis. This chain is Acetyl-coenzyme A synthetase, found in Yersinia pseudotuberculosis serotype I (strain IP32953).